Consider the following 299-residue polypeptide: Muscleblind-like protein (299 aa).

2 C3H1-type zinc fingers span residues 38-66 and 72-100; these read WLQVEVCREFLRGQCARSDQECKFAHPPP and QGRVTACYDSIKGRCTRENPKCKYLHPPQ.

It belongs to the muscleblind family.

Its subcellular location is the nucleus. In terms of biological role, binds to RNA with repeat sequences CUG and CCUG. The polypeptide is Muscleblind-like protein (Caenorhabditis briggsae).